We begin with the raw amino-acid sequence, 1373 residues long: DNA-directed RNA polymerase subunit beta (1373 aa).

The protein belongs to the RNA polymerase beta chain family. As to quaternary structure, the RNAP catalytic core consists of 2 alpha, 1 beta, 1 beta' and 1 omega subunit. When a sigma factor is associated with the core the holoenzyme is formed, which can initiate transcription.

The catalysed reaction is RNA(n) + a ribonucleoside 5'-triphosphate = RNA(n+1) + diphosphate. Functionally, DNA-dependent RNA polymerase catalyzes the transcription of DNA into RNA using the four ribonucleoside triphosphates as substrates. The polypeptide is DNA-directed RNA polymerase subunit beta (Rickettsia massiliae).